Reading from the N-terminus, the 509-residue chain is ATP synthase subunit alpha (509 aa).

Position 169 to 176 (169 to 176 (GDRQTGKT)) interacts with ATP.

Belongs to the ATPase alpha/beta chains family. As to quaternary structure, F-type ATPases have 2 components, CF(1) - the catalytic core - and CF(0) - the membrane proton channel. CF(1) has five subunits: alpha(3), beta(3), gamma(1), delta(1), epsilon(1). CF(0) has three main subunits: a(1), b(2) and c(9-12). The alpha and beta chains form an alternating ring which encloses part of the gamma chain. CF(1) is attached to CF(0) by a central stalk formed by the gamma and epsilon chains, while a peripheral stalk is formed by the delta and b chains.

Its subcellular location is the cell inner membrane. It catalyses the reaction ATP + H2O + 4 H(+)(in) = ADP + phosphate + 5 H(+)(out). Functionally, produces ATP from ADP in the presence of a proton gradient across the membrane. The alpha chain is a regulatory subunit. The sequence is that of ATP synthase subunit alpha from Sinorhizobium medicae (strain WSM419) (Ensifer medicae).